Here is a 112-residue protein sequence, read N- to C-terminus: Pediocin PA-1 immunity protein (112 aa).

In terms of biological role, imparts immunity to pediocin PA-1/ACH to naturally sensitive host strains. The chain is Pediocin PA-1 immunity protein (pedB) from Pediococcus acidilactici.